A 115-amino-acid chain; its full sequence is NADH-ubiquinone oxidoreductase chain 3 (115 aa).

3 consecutive transmembrane segments (helical) span residues 1 to 21 (MITL…LLII), 55 to 75 (FFLV…LFPL), and 87 to 107 (AIIL…YEWL).

This sequence belongs to the complex I subunit 3 family.

It is found in the mitochondrion membrane. It catalyses the reaction a ubiquinone + NADH + 5 H(+)(in) = a ubiquinol + NAD(+) + 4 H(+)(out). Functionally, core subunit of the mitochondrial membrane respiratory chain NADH dehydrogenase (Complex I) that is believed to belong to the minimal assembly required for catalysis. Complex I functions in the transfer of electrons from NADH to the respiratory chain. The immediate electron acceptor for the enzyme is believed to be ubiquinone. The polypeptide is NADH-ubiquinone oxidoreductase chain 3 (MT-ND3) (Myxine glutinosa (Atlantic hagfish)).